An 841-amino-acid chain; its full sequence is Transcription regulator protein BACH2 (841 aa).

One can recognise a BTB domain in the interval 37 to 103; it reads CDVTLIVERK…AYTAKLLLSR (67 aa). Disordered stretches follow at residues 153 to 173, 204 to 226, and 246 to 329; these read HEDC…TMDS, EALL…DALT, and SSHS…AACL. A compositionally biased stretch (acidic residues) spans 160–172; that stretch reads AGEEEDEEEETMD. Composition is skewed to basic and acidic residues over residues 214–224 and 298–313; these read TDTKESSEKDA and PDAK…DRKQ. Position 315 is a phosphoserine (Ser315). Residues Lys382 and Lys421 each participate in a glycyl lysine isopeptide (Lys-Gly) (interchain with G-Cter in SUMO2) cross-link. Position 521 is a phosphoserine; by RPS6KB1 (Ser521). The tract at residues 583 to 610 is disordered; it reads QSYGTNSSDESGSFSEADSESCPVQDRG. A compositionally biased stretch (polar residues) spans 584 to 598; sequence SYGTNSSDESGSFSE. In terms of domain architecture, bZIP spans 646–709; sequence FIHDVRRRSK…GELLDNFSCL (64 aa). Positions 651 to 667 are basic motif; that stretch reads RRRSKNRIAAQRCRKRK. A leucine-zipper region spans residues 671–678; sequence IQNLECEI. A disordered region spans residues 777–816; the sequence is PGPPWAPSNTSENCTSGRRLEGTDPGTFSERGPPLEPRSQ. Positions 821 to 841 match the Nuclear export signal motif; sequence DFCQEMTDKCTTDEQPRKDYT.

This sequence belongs to the bZIP family. CNC subfamily. In terms of assembly, homodimer; disulfide-linked. Heterodimer of BACH2 and Maf-related transcription factors. Phosphorylation at Ser-521 downstream of the PI-3K pathway promotes nuclear export. Post-translationally, the reversible disulfide bond may provide a mechanism to regulate the activity in oxidative stress responses. B-cell specific.

The protein resides in the cytoplasm. Its subcellular location is the nucleus. Its function is as follows. Transcriptional regulator that acts as a repressor or activator. Binds to Maf recognition elements (MARE). Plays an important role in coordinating transcription activation and repression by MAFK. Induces apoptosis in response to oxidative stress through repression of the antiapoptotic factor HMOX1. Positively regulates the nuclear import of actin. Is a key regulator of adaptive immunity, crucial for the maintenance of regulatory T-cell function and B-cell maturation. In Homo sapiens (Human), this protein is Transcription regulator protein BACH2 (BACH2).